The primary structure comprises 728 residues: Myb-related protein A (728 aa).

The segment at 1–31 (MAGRARSEDEEEDGQFTEHDYDVSLQKGPKK) is disordered. 3 HTH myb-type domains span residues 30–80 (KKPW…HKVL), 81–136 (SPEL…NPDV), and 137–187 (KKSS…KRKV). DNA-binding regions (H-T-H motif) lie at residues 57-80 (WGVV…HKVL), 109-132 (WSII…HNHL), and 160-183 (WAEI…NSTM). Residues 230-293 (IPRYSSLSHD…RKRVPSGSSL (64 aa)) are transcriptional activation domain. Residues 296 to 534 (SESYHMGESM…IRRSLMAVTP (239 aa)) are negative regulatory domain.

Component of the DREAM complex.

Its subcellular location is the nucleus. Functionally, transcription factor that specifically recognizes the sequence 5'-YAAC[GT]G-3'. Acts as a master regulator of male meiosis by promoting expression of piRNAs. The piRNA metabolic process mediates the repression of transposable elements during meiosis by forming complexes composed of piRNAs and Piwi proteins and governs the methylation and subsequent repression of transposons, which is essential for the germline integrity. The chain is Myb-related protein A (mybl1) from Xenopus laevis (African clawed frog).